Consider the following 426-residue polypeptide: Dihydroorotase (426 aa).

The Zn(2+) site is built by histidine 58 and histidine 60. Substrate is bound by residues 60 to 62 (HLR) and asparagine 92. Residues aspartate 150, histidine 177, and histidine 230 each contribute to the Zn(2+) site. Asparagine 276 provides a ligand contact to substrate. Aspartate 303 lines the Zn(2+) pocket. Aspartate 303 is an active-site residue. Substrate contacts are provided by residues histidine 307 and 321–322 (FG).

The protein belongs to the metallo-dependent hydrolases superfamily. DHOase family. Class I DHOase subfamily. Zn(2+) is required as a cofactor.

It carries out the reaction (S)-dihydroorotate + H2O = N-carbamoyl-L-aspartate + H(+). It functions in the pathway pyrimidine metabolism; UMP biosynthesis via de novo pathway; (S)-dihydroorotate from bicarbonate: step 3/3. Functionally, catalyzes the reversible cyclization of carbamoyl aspartate to dihydroorotate. The chain is Dihydroorotase from Listeria welshimeri serovar 6b (strain ATCC 35897 / DSM 20650 / CCUG 15529 / CIP 8149 / NCTC 11857 / SLCC 5334 / V8).